The sequence spans 502 residues: ATP synthase subunit beta (502 aa).

156–163 (GGAGVGKT) lines the ATP pocket.

It belongs to the ATPase alpha/beta chains family. In terms of assembly, F-type ATPases have 2 components, CF(1) - the catalytic core - and CF(0) - the membrane proton channel. CF(1) has five subunits: alpha(3), beta(3), gamma(1), delta(1), epsilon(1). CF(0) has three main subunits: a(1), b(2) and c(9-12). The alpha and beta chains form an alternating ring which encloses part of the gamma chain. CF(1) is attached to CF(0) by a central stalk formed by the gamma and epsilon chains, while a peripheral stalk is formed by the delta and b chains.

Its subcellular location is the cell membrane. It carries out the reaction ATP + H2O + 4 H(+)(in) = ADP + phosphate + 5 H(+)(out). Produces ATP from ADP in the presence of a proton gradient across the membrane. The catalytic sites are hosted primarily by the beta subunits. In Cellulophaga lytica (Cytophaga lytica), this protein is ATP synthase subunit beta.